A 239-amino-acid chain; its full sequence is LexA repressor (239 aa).

The H-T-H motif DNA-binding region spans 26–46; it reads FDEMKDALDLASKSGIHRLIT. The disordered stretch occupies residues 84 to 107; it reads SPSVIEGSLGKPQPVATPAPAKSV. Residues Ser159 and Lys197 each act as for autocatalytic cleavage activity in the active site.

Belongs to the peptidase S24 family. Homodimer.

The catalysed reaction is Hydrolysis of Ala-|-Gly bond in repressor LexA.. Functionally, represses a number of genes involved in the response to DNA damage (SOS response), including recA and lexA. In the presence of single-stranded DNA, RecA interacts with LexA causing an autocatalytic cleavage which disrupts the DNA-binding part of LexA, leading to derepression of the SOS regulon and eventually DNA repair. This Rhizobium johnstonii (strain DSM 114642 / LMG 32736 / 3841) (Rhizobium leguminosarum bv. viciae) protein is LexA repressor.